The following is a 208-amino-acid chain: Probable GTP-binding protein EngB (208 aa).

Positions 25–199 (TGIEVAFAGR…RQKLDSWYNG (175 aa)) constitute an EngB-type G domain. GTP is bound by residues 33-40 (GRSNAGKS), 60-64 (GRTQL), 78-81 (DLPG), 145-148 (TKSD), and 178-180 (FSS). The Mg(2+) site is built by serine 40 and threonine 62.

It belongs to the TRAFAC class TrmE-Era-EngA-EngB-Septin-like GTPase superfamily. EngB GTPase family. It depends on Mg(2+) as a cofactor.

Necessary for normal cell division and for the maintenance of normal septation. In Enterobacter sp. (strain 638), this protein is Probable GTP-binding protein EngB.